A 338-amino-acid chain; its full sequence is MQAQPIHARLMNGEVLSQDDATAFMREVMSGDMSGVRMAAALAALRVRGETPEEIAGFAQAMRESAVTVKVRPRDVLMDVVGTGGDGAHTFNISTTTAFVLAGAGVPIAKHGNRAASSRAGSADVLEALGVNLDASPEVIQEAIDTLGVGFMFARNYHPALRHAAPVRSDLAARTVFNILGPLSNPAGATHLVVGVFRADLTRTLAEALRHLGAKGATVVYGDGLDEFTVCGPNTVSGLRDGEIIDRTMHPEEFGVDLHPKTAIVGGSPAENAEITHALLTGGGTPAQKDIVALNAGAALRTAGRVGTIREGVEQAREVMKGGQGWEMLQKYGALTKR.

5-phospho-alpha-D-ribose 1-diphosphate contacts are provided by residues Gly-82, 85 to 86 (GD), Thr-90, 92 to 95 (NIST), 110 to 118 (KHGNRAASS), and Ser-122. Gly-82 provides a ligand contact to anthranilate. Ser-94 lines the Mg(2+) pocket. Asn-113 lines the anthranilate pocket. Residue Arg-168 coordinates anthranilate. Mg(2+)-binding residues include Asp-226 and Glu-227.

It belongs to the anthranilate phosphoribosyltransferase family. As to quaternary structure, homodimer. The cofactor is Mg(2+).

The enzyme catalyses N-(5-phospho-beta-D-ribosyl)anthranilate + diphosphate = 5-phospho-alpha-D-ribose 1-diphosphate + anthranilate. Its pathway is amino-acid biosynthesis; L-tryptophan biosynthesis; L-tryptophan from chorismate: step 2/5. In terms of biological role, catalyzes the transfer of the phosphoribosyl group of 5-phosphorylribose-1-pyrophosphate (PRPP) to anthranilate to yield N-(5'-phosphoribosyl)-anthranilate (PRA). The sequence is that of Anthranilate phosphoribosyltransferase from Deinococcus radiodurans (strain ATCC 13939 / DSM 20539 / JCM 16871 / CCUG 27074 / LMG 4051 / NBRC 15346 / NCIMB 9279 / VKM B-1422 / R1).